The primary structure comprises 253 residues: MNLTDKTVLITGGASGIGYAAVQAFLNQQANVVVADIDEAQGEAMIRKENNDRLHFVHTDITDEPACQNAIRSAVDKFGGLDVLINNAGIEIVAPIHEMELSNWNKVLNVNLTGMFLMSKHALKYMLKSGKGNIINTCSVGGVVAWPDIPAYNASKGGVLQLTRSMAVDYAKHNIRVNCVCPGIIDTPLNEKSFLENNEGTLEEIKKEKAKVNPLLRLGKPEEIANVMLFLASDLSSYMTGSAITADGGYTAQ.

9-31 (LITGGASGIGYAAVQAFLNQQAN) contacts NAD(+). Ser-139 contributes to the substrate binding site. Catalysis depends on Tyr-152, which acts as the Proton acceptor.

Belongs to the short-chain dehydrogenases/reductases (SDR) family.

It carries out the reaction L-dihydroanticapsin + NAD(+) = L-anticapsin + NADH + H(+). It functions in the pathway antibiotic biosynthesis; bacilysin biosynthesis. Functionally, part of the bacABCDEFG operon responsible for the biosynthesis of bacilysin, an irreversible inactivator of the glutaminase domain of glucosamine synthetase. Catalyzes the dehydrogenation of the C7-hydroxyl group in the 4S-tetrahydrotyrosine (4S-H4Tyr) to yield anticapsin (epoxycyclohexanonyl-Ala). This chain is Dihydroanticapsin 7-dehydrogenase, found in Bacillus subtilis.